The following is a 516-amino-acid chain: 7-chloro-L-tryptophan 6-halogenase KtzR (516 aa).

Gly6, Thr8, Ala9, Glu42, and Ala43 together coordinate FAD. Residue Lys71 is part of the active site. FAD is bound at residue Val195. Chloride is bound by residues Thr357 and Gly358. Ile359 contacts FAD.

It belongs to the flavin-dependent halogenase family. Bacterial tryptophan halogenase subfamily.

The catalysed reaction is 7-chloro-L-tryptophan + FADH2 + chloride + O2 = 6,7-dichloro-L-tryptophan + FAD + 2 H2O. In terms of biological role, involved in the biosynthesis of kutznerides, actinomycete-derived antifungal and antimicrobial cyclic hexadepsipeptides. Together with KtzQ, catalyzes the regiospecific dichlorination of L-tryptophan (L-Trp) to produce 6,7-dichloro-L-tryptophan. KtzR catalyzes the chlorination of 7-chloro-L-tryptophan at C6 position to yield 6,7-dichloro-L-tryptophan. Can also use L-Trp as substrate and form 6-chloro-L-tryptophan, but has a 120-fold preference for 7-chloro-L-tryptophan over L-Trp. Cannot use piperazic acid or gamma,delta-dehydropiperazic acid. The protein is 7-chloro-L-tryptophan 6-halogenase KtzR of Kutzneria sp. (strain 744).